The primary structure comprises 131 residues: MSATTDAGQLAAFHRCSTAEEYFTLLEVDYDPRVVAVNRLHILKHFAGELAKLPEAGADAANPRHLLHDYRDALVRSYEAFTNATALDHRLFKVLKDRAPKSAFVPASEITVERLGSTQPSETSEQTEEAR.

It belongs to the NifW family. Homotrimer; associates with NifD.

In terms of biological role, may protect the nitrogenase Fe-Mo protein from oxidative damage. This Frankia alni (strain DSM 45986 / CECT 9034 / ACN14a) protein is Nitrogenase-stabilizing/protective protein NifW.